The following is a 625-amino-acid chain: Phosphomethylpyrimidine synthase (625 aa).

Residues N230, M259, Y288, H324, S344 to G346, D385 to R388, and E424 contribute to the substrate site. H428 serves as a coordination point for Zn(2+). Residue Y451 coordinates substrate. H492 lines the Zn(2+) pocket. [4Fe-4S] cluster contacts are provided by C572, C575, and C580.

This sequence belongs to the ThiC family. Homodimer. [4Fe-4S] cluster serves as cofactor.

The catalysed reaction is 5-amino-1-(5-phospho-beta-D-ribosyl)imidazole + S-adenosyl-L-methionine = 4-amino-2-methyl-5-(phosphooxymethyl)pyrimidine + CO + 5'-deoxyadenosine + formate + L-methionine + 3 H(+). It participates in cofactor biosynthesis; thiamine diphosphate biosynthesis. Catalyzes the synthesis of the hydroxymethylpyrimidine phosphate (HMP-P) moiety of thiamine from aminoimidazole ribotide (AIR) in a radical S-adenosyl-L-methionine (SAM)-dependent reaction. This Xanthomonas oryzae pv. oryzae (strain MAFF 311018) protein is Phosphomethylpyrimidine synthase.